A 287-amino-acid chain; its full sequence is Lys-63-specific deubiquitinase (287 aa).

In terms of domain architecture, MPN spans 33–176; it reads VHLESDAFLV…YTCFQSVQAQ (144 aa). Residues His119, His121, and Asp132 each coordinate Zn(2+). Positions 119–132 match the JAMM motif motif; that stretch reads HSHPHITVWPSHVD. The stretch at 256-283 forms a coiled coil; the sequence is LQWLEDRLEQNKQSIITLQKEKELLTQE.

Belongs to the peptidase M67A family. BRCC36 subfamily. Monomer. Homodimer. Component of the BRISC complex, at least composed of abraxas2, brcc3, babam1 and babam2. Interacts with abraxas2; the interaction is direct and may form a heterotetramer. Component of the BRCA1-A complex. Both the BRCA1-A complex and the BRISC complex bind polyubiquitin. Zn(2+) serves as cofactor.

It localises to the nucleus. It is found in the cytoplasm. The protein localises to the cytoskeleton. Its subcellular location is the spindle pole. In terms of biological role, metalloprotease that specifically cleaves 'Lys-63'-linked polyubiquitin chains, leaving the last ubiquitin chain attached to its substrates. Catalytic subunit of the BRISC complex, a multiprotein complex that specifically cleaves 'Lys-63'-linked ubiquitin in various substrates; brcc3 does not have activity by itself, but needs to be associated into a higher-order assembly, for minimal in vitro activity. This is Lys-63-specific deubiquitinase from Danio rerio (Zebrafish).